Consider the following 148-residue polypeptide: Ubiquitin-conjugating enzyme E2 8 (148 aa).

The UBC core domain occupies 1 to 147; the sequence is MASKRILKEL…ARNWTQKYAM (147 aa). Cysteine 85 serves as the catalytic Glycyl thioester intermediate.

It belongs to the ubiquitin-conjugating enzyme family. Interacts with CIP8, CHIP, NLA and XERICO. In terms of tissue distribution, highest expression in young stems, old leaves. Lowest levels in floral buds, anthers and young leaves.

The catalysed reaction is S-ubiquitinyl-[E1 ubiquitin-activating enzyme]-L-cysteine + [E2 ubiquitin-conjugating enzyme]-L-cysteine = [E1 ubiquitin-activating enzyme]-L-cysteine + S-ubiquitinyl-[E2 ubiquitin-conjugating enzyme]-L-cysteine.. It functions in the pathway protein modification; protein ubiquitination. In terms of biological role, accepts the ubiquitin from the E1 complex and catalyzes its covalent attachment to other proteins. Mediates the selective degradation of short-lived and abnormal proteins. This chain is Ubiquitin-conjugating enzyme E2 8 (UBC8), found in Arabidopsis thaliana (Mouse-ear cress).